The chain runs to 994 residues: Leucine-rich repeat receptor-like kinase protein FLORAL ORGAN NUMBER1 (994 aa).

The signal sequence occupies residues 1 to 17 (MPPTLLLLLLLLPPSLA). LRR repeat units follow at residues 73-93 (AINL…IALL), 94-117 (DSLA…LPTL), 118-141 (PSLR…DSGG), 147-171 (FPSL…SASH), 172-194 (ARLR…SYGD), 195-219 (LAAL…LSRL), 244-268 (LGAL…LGRL), 269-292 (QRLD…LGDL), 293-316 (SSLA…LANL), 318-340 (NLKL…VAGF), 341-364 (AQLE…LGKN), 365-388 (GRLK…LCAG), 390-412 (RLEM…LGDC), 413-436 (KTLT…LFNL), 438-459 (QANM…VIGG), 460-483 (DKIG…IGNL), 484-507 (PALQ…IGNL), 509-531 (NLSR…LIRC), 533-555 (SLAA…ITSL), 556-579 (KILC…MSNM), and 581-604 (SLTT…QFLV). Residues N75, N98, N124, N129, and N159 are each glycosylated (N-linked (GlcNAc...) asparagine). The N-linked (GlcNAc...) asparagine glycan is linked to N256. The N-linked (GlcNAc...) asparagine glycan is linked to N315. N352 carries N-linked (GlcNAc...) asparagine glycosylation. N495, N509, and N514 each carry an N-linked (GlcNAc...) asparagine glycan. N-linked (GlcNAc...) asparagine glycans are attached at residues N562 and N578. N-linked (GlcNAc...) asparagine glycosylation is present at N606. The helical transmembrane segment at 647–667 (KKMLVALVAAFAAVAVAFLGA) threads the bilayer. Positions 704–978 (VKEDNIIGKG…TMREVVHMLS (275 aa)) constitute a Protein kinase domain. ATP is bound by residues 710 to 718 (IGKGGAGIV) and K731. Catalysis depends on D828, which acts as the Proton acceptor.

Belongs to the protein kinase superfamily. Ser/Thr protein kinase family. Expressed in shoot apical meristem, and after transition to the reproductive phase, detected in the inflorescence and the floral meristems. Expressed uniformly throughout the meristems. Expressed also in floral organ primordia, such as the palea, lemma, lodicules, stamens, carpels and ovules.

The protein localises to the membrane. It carries out the reaction L-seryl-[protein] + ATP = O-phospho-L-seryl-[protein] + ADP + H(+). The enzyme catalyses L-threonyl-[protein] + ATP = O-phospho-L-threonyl-[protein] + ADP + H(+). Functionally, receptor-like kinase protein that regulates the size of the floral meristem. The polypeptide is Leucine-rich repeat receptor-like kinase protein FLORAL ORGAN NUMBER1 (FON1) (Oryza sativa subsp. japonica (Rice)).